Reading from the N-terminus, the 395-residue chain is Glutamate N-acetyltransferase (395 aa).

The substrate site is built by threonine 146, lysine 169, threonine 180, glutamate 263, asparagine 390, and threonine 395. Catalysis depends on threonine 180, which acts as the Nucleophile.

The protein belongs to the ArgJ family. Heterotetramer of two alpha and two beta chains.

The protein localises to the cytoplasm. The enzyme catalyses N(2)-acetyl-L-ornithine + L-glutamate = N-acetyl-L-glutamate + L-ornithine. It participates in amino-acid biosynthesis; L-arginine biosynthesis; L-ornithine and N-acetyl-L-glutamate from L-glutamate and N(2)-acetyl-L-ornithine (cyclic): step 1/1. Its function is as follows. Catalyzes the transfer of the acetyl group from N(2)-acetylornithine to glutamate, forming N-acetylglutamate and L-ornithine. The protein is Glutamate N-acetyltransferase of Methanosarcina mazei (strain ATCC BAA-159 / DSM 3647 / Goe1 / Go1 / JCM 11833 / OCM 88) (Methanosarcina frisia).